The chain runs to 211 residues: N-(5'-phosphoribosyl)anthranilate isomerase (211 aa).

This sequence belongs to the TrpF family.

The catalysed reaction is N-(5-phospho-beta-D-ribosyl)anthranilate = 1-(2-carboxyphenylamino)-1-deoxy-D-ribulose 5-phosphate. It functions in the pathway amino-acid biosynthesis; L-tryptophan biosynthesis; L-tryptophan from chorismate: step 3/5. The sequence is that of N-(5'-phosphoribosyl)anthranilate isomerase from Hyphomonas neptunium (strain ATCC 15444).